The sequence spans 66 residues: Small ribosomal subunit protein eS27 (66 aa).

Positions 21, 24, 40, and 43 each coordinate Zn(2+). The segment at 21-43 (CRQCNNEQVIFSNATFPVRCLSC) adopts a C4-type zinc-finger fold.

The protein belongs to the eukaryotic ribosomal protein eS27 family. In terms of assembly, part of the 30S ribosomal subunit. The cofactor is Zn(2+).

The chain is Small ribosomal subunit protein eS27 from Sulfolobus acidocaldarius (strain ATCC 33909 / DSM 639 / JCM 8929 / NBRC 15157 / NCIMB 11770).